Here is a 383-residue protein sequence, read N- to C-terminus: Putative glutamate--cysteine ligase 2-1 (383 aa).

This sequence belongs to the glutamate--cysteine ligase type 2 family. YbdK subfamily.

The enzyme catalyses L-cysteine + L-glutamate + ATP = gamma-L-glutamyl-L-cysteine + ADP + phosphate + H(+). In terms of biological role, ATP-dependent carboxylate-amine ligase which exhibits weak glutamate--cysteine ligase activity. This Nocardia farcinica (strain IFM 10152) protein is Putative glutamate--cysteine ligase 2-1.